An 804-amino-acid chain; its full sequence is Leucine--tRNA ligase (804 aa).

The 'HIGH' region motif lies at 40-51 (PYPSGAGLHVGH). The 'KMSKS' region signature appears at 576-580 (KMSKS). Residue Lys579 participates in ATP binding.

It belongs to the class-I aminoacyl-tRNA synthetase family.

The protein resides in the cytoplasm. The enzyme catalyses tRNA(Leu) + L-leucine + ATP = L-leucyl-tRNA(Leu) + AMP + diphosphate. The chain is Leucine--tRNA ligase from Staphylococcus aureus (strain Mu3 / ATCC 700698).